Reading from the N-terminus, the 741-residue chain is Moderate conductance mechanosensitive channel YbiO (741 aa).

An N-terminal signal peptide occupies residues 1-18; it reads MRWILFILFCLLGAPAHA. The tract at residues 22–42 is disordered; it reads PGVTTTTTTDSTTEPAPEPDI. Residues 25–34 are compositionally biased toward low complexity; sequence TTTTTTDSTT. Transmembrane regions (helical) follow at residues 143–163, 185–205, 225–245, 268–288, 294–314, 343–363, 372–392, 432–452, 466–486, 509–529, and 533–553; these read MLAV…LPLY, AMII…LFVG, LFLN…LIFC, LSWL…IISN, IGAL…LYLI, FALV…FFSL, FMMG…FVSG, ILTV…FDFW, ILIR…VLAS, LLTL…IMIV, and IGVN…AISF.

The protein belongs to the MscS (TC 1.A.23) family. In terms of assembly, homoheptamer.

It localises to the cell inner membrane. In terms of biological role, mechanosensitive channel that protects cells against hypoosmotic stress when highly overexpressed. This is Moderate conductance mechanosensitive channel YbiO (ybiO) from Escherichia coli (strain K12).